Here is a 575-residue protein sequence, read N- to C-terminus: Beta-amylase 1, chloroplastic (575 aa).

The N-terminal 41 residues, 1-41 (MALNLSHQLGVLAGTPIKSGEMTDSSLLSISPPSARMMTPK), are a transit peptide targeting the chloroplast. A phosphoserine mark is found at Ser55 and Ser59. Cys73 and Cys511 are oxidised to a cystine. Substrate contacts are provided by Asp147, His187, and Asp195. Glu279 acts as the Proton donor in catalysis. Substrate-binding residues include Lys392, His397, and Thr439. Catalysis depends on Glu477, which acts as the Proton acceptor. Residues 478 to 479 (NA) and Arg517 each bind substrate.

This sequence belongs to the glycosyl hydrolase 14 family. Expressed in leaves, roots, flowers, pollen, and seeds.

It is found in the plastid. It localises to the chloroplast. The catalysed reaction is Hydrolysis of (1-&gt;4)-alpha-D-glucosidic linkages in polysaccharides so as to remove successive maltose units from the non-reducing ends of the chains.. With respect to regulation, redox regulation; active in reducing conditions, inactive in oxidizing conditions. Thioredoxins f1, m1, and y1 mediate the reversible reductive activation of oxidized BAM1. Its function is as follows. Beta-amylase activity. Can use p-nitrophenyl maltopentaoside (PNPG5) as substrate only in reduced form. Can play a minor role in the starch degradation and maltose metabolism in chloroplasts during the night. More active on phosphorylated glucan. Interacts directly with starch or other alpha-1,4-glucan. The polypeptide is Beta-amylase 1, chloroplastic (BAM1) (Arabidopsis thaliana (Mouse-ear cress)).